The sequence spans 636 residues: Chaperone protein HtpG (636 aa).

Residues 1–344 (MTMSVETQKE…SNDLSLNVSR (344 aa)) form an a; substrate-binding region. Residues 345 to 561 (EILQKDPIID…EQDLGMQMRQ (217 aa)) are b. Positions 562 to 636 (ILEASGQKVP…LNKLLVELSV (75 aa)) are c.

Belongs to the heat shock protein 90 family. Homodimer.

Its subcellular location is the cytoplasm. Functionally, molecular chaperone. Has ATPase activity. The protein is Chaperone protein HtpG of Pseudomonas fluorescens (strain SBW25).